The sequence spans 247 residues: UPF0612 protein P20C8.01c (247 aa).

Coiled coils occupy residues 27-63 and 138-225; these read IKRYERSVDSTLLEIDENKREALEKYIEERDRKMKYE and DTVQ…DARS.

This sequence belongs to the UPF0612 family.

It localises to the cytoplasm. This is UPF0612 protein P20C8.01c from Schizosaccharomyces pombe (strain 972 / ATCC 24843) (Fission yeast).